The primary structure comprises 861 residues: Leucine--tRNA ligase (861 aa).

Positions 42–52 (PYPSGKLHMGH) match the 'HIGH' region motif. The 'KMSKS' region signature appears at 620–624 (KMSKS). Residue Lys623 coordinates ATP.

It belongs to the class-I aminoacyl-tRNA synthetase family.

The protein localises to the cytoplasm. It carries out the reaction tRNA(Leu) + L-leucine + ATP = L-leucyl-tRNA(Leu) + AMP + diphosphate. This is Leucine--tRNA ligase from Hahella chejuensis (strain KCTC 2396).